The following is an 844-amino-acid chain: Beta-mannosidase B (844 aa).

Glu432 serves as the catalytic Proton donor. N-linked (GlcNAc...) asparagine glycosylation is present at Asn723.

The protein belongs to the glycosyl hydrolase 2 family. Beta-mannosidase B subfamily.

It carries out the reaction Hydrolysis of terminal, non-reducing beta-D-mannose residues in beta-D-mannosides.. It functions in the pathway glycan metabolism; N-glycan degradation. Exoglycosidase that cleaves the single beta-linked mannose residue from the non-reducing end of beta-mannosidic oligosaccharides of various complexity and length. Prefers mannobiose over mannotriose and has no activity against polymeric mannan. Is also severely restricted by galactosyl substitutions at the +1 subsite. The chain is Beta-mannosidase B (mndB) from Aspergillus niger (strain ATCC MYA-4892 / CBS 513.88 / FGSC A1513).